The chain runs to 373 residues: UDP-glucose 4-epimerase 3 (373 aa).

An NAD(+)-binding site is contributed by 27-58; the sequence is SVLVTGGAGYIGTHTVLRLLEKGFAVTVVDNF. S153 contacts substrate. Y177 functions as the Proton acceptor in the catalytic mechanism.

Belongs to the NAD(P)-dependent epimerase/dehydratase family. The cofactor is NAD(+).

It carries out the reaction UDP-alpha-D-glucose = UDP-alpha-D-galactose. It participates in carbohydrate metabolism; galactose metabolism. Catalyzes the interconversion between UDP-glucose and UDP-galactose. The protein is UDP-glucose 4-epimerase 3 (UGE-3) of Oryza sativa subsp. japonica (Rice).